Here is a 306-residue protein sequence, read N- to C-terminus: Pantothenate kinase (306 aa).

91–98 (GSVAVGKS) serves as a coordination point for ATP.

It belongs to the prokaryotic pantothenate kinase family.

It localises to the cytoplasm. The enzyme catalyses (R)-pantothenate + ATP = (R)-4'-phosphopantothenate + ADP + H(+). The protein operates within cofactor biosynthesis; coenzyme A biosynthesis; CoA from (R)-pantothenate: step 1/5. The sequence is that of Pantothenate kinase from Streptococcus thermophilus (strain ATCC BAA-491 / LMD-9).